The following is a 118-amino-acid chain: Holo-[acyl-carrier-protein] synthase (118 aa).

Mg(2+) contacts are provided by Asp8 and Glu58.

The protein belongs to the P-Pant transferase superfamily. AcpS family. Mg(2+) is required as a cofactor.

Its subcellular location is the cytoplasm. The enzyme catalyses apo-[ACP] + CoA = holo-[ACP] + adenosine 3',5'-bisphosphate + H(+). Its function is as follows. Transfers the 4'-phosphopantetheine moiety from coenzyme A to a Ser of acyl-carrier-protein. The polypeptide is Holo-[acyl-carrier-protein] synthase (Listeria innocua serovar 6a (strain ATCC BAA-680 / CLIP 11262)).